A 365-amino-acid polypeptide reads, in one-letter code: MSSSVEQKKGPTRQRKCGFCKSNRDKECGQLLISENQKVAAHHKCMLFSSALVSSHSDNESLGGFSIEDVQKEIKRGTKLMCSLCHCPGATIGCDVKTCHRTYHYHCALHDKAQIREKPSQGIYMVYCRKHKKTAHNSEADLEESFNEHELEPSSPKSKKKSRKGRPRKTNFKGLSEDTRSTSSHGTDEMESSSYRDRSPHRSSPSDTRPKCGFCHVGEEENQARGKLHIFNAKKAAAHYKCMLFSSGTVQLTTTSRAEFGDFDIKTVLQEIKRGKRMKCTLCSQPGATIGCEIKACVKTYHYHCGVQDKAKYIENMSRGIYKLYCKNHSGNDERDEEDEERESKSRGKVEIDQQQLTQQQLNGN.

An N-acetylserine modification is found at Ser2. 2 consecutive short sequence motifs (nuclear localization signal) follow at residues 13–16 and 129–133; these read RQRK and RKHKK. The C2HC pre-PHD-type 1 zinc-finger motif lies at 14–52; sequence QRKCGFCKSNRDKECGQLLISENQKVAAHHKCMLFSSAL. Residues 14 to 132 form an extended PHD1 domain (ePHD1) region; the sequence is QRKCGFCKSN…IYMVYCRKHK (119 aa). The PHD-type 1 zinc-finger motif lies at 80–132; sequence LMCSLCHCPGATIGCDVKTCHRTYHYHCALHDKAQIREKPSQGIYMVYCRKHK. Ser138, Ser145, and Ser155 each carry phosphoserine. The segment at 139–211 is disordered; it reads EADLEESFNE…RSSPSDTRPK (73 aa). The short motif at 157–169 is the Nucleolar localization signal element; the sequence is KSKKKSRKGRPRK. A compositionally biased stretch (basic residues) spans 157-171; sequence KSKKKSRKGRPRKTN. Lys173 participates in a covalent cross-link: Glycyl lysine isopeptide (Lys-Gly) (interchain with G-Cter in SUMO2). 2 positions are modified to phosphoserine: Ser183 and Ser199. Residues 209-249 form a C2HC pre-PHD-type 2 zinc finger; it reads RPKCGFCHVGEEENQARGKLHIFNAKKAAAHYKCMLFSSGT. Residues 209-330 form an extended PHD2 domain (ePHD2) region; that stretch reads RPKCGFCHVG…IYKLYCKNHS (122 aa). Lys227 is covalently cross-linked (Glycyl lysine isopeptide (Lys-Gly) (interchain with G-Cter in SUMO2)). A PHD-type 2 zinc finger spans residues 278 to 330; it reads MKCTLCSQPGATIGCEIKACVKTYHYHCGVQDKAKYIENMSRGIYKLYCKNHS. The disordered stretch occupies residues 330 to 365; it reads SGNDERDEEDEERESKSRGKVEIDQQQLTQQQLNGN. The segment covering 342–352 has biased composition (basic and acidic residues); it reads RESKSRGKVEI. Residues 354-365 show a composition bias toward low complexity; that stretch reads QQQLTQQQLNGN. The residue at position 358 (Thr358) is a Phosphothreonine.

Interacts with UBTF. Interacts with the NuRD complex component RBBP4 (via the nucleolar localization motif), the interaction mediates transcriptional repression activity.

It is found in the nucleus. Its subcellular location is the nucleolus. It localises to the chromosome. The protein localises to the centromere. The protein resides in the kinetochore. Its function is as follows. Transcriptional regulator that associates with ribosomal RNA promoters and suppresses ribosomal RNA (rRNA) transcription. This chain is PHD finger protein 6 (PHF6), found in Bos taurus (Bovine).